The following is a 382-amino-acid chain: 1-deoxy-D-xylulose 5-phosphate reductoisomerase (382 aa).

NADPH-binding residues include Thr10, Gly11, Ser12, Ile13, Gly36, and Asn122. Lys123 contacts 1-deoxy-D-xylulose 5-phosphate. Glu124 lines the NADPH pocket. Residue Asp148 participates in Mn(2+) binding. 1-deoxy-D-xylulose 5-phosphate-binding residues include Ser149, Glu150, Ser174, and His197. A Mn(2+)-binding site is contributed by Glu150. Gly203 lines the NADPH pocket. Residues Ser210, Asn215, Lys216, and Glu219 each coordinate 1-deoxy-D-xylulose 5-phosphate. Position 219 (Glu219) interacts with Mn(2+).

The protein belongs to the DXR family. Mg(2+) serves as cofactor. It depends on Mn(2+) as a cofactor.

It carries out the reaction 2-C-methyl-D-erythritol 4-phosphate + NADP(+) = 1-deoxy-D-xylulose 5-phosphate + NADPH + H(+). It participates in isoprenoid biosynthesis; isopentenyl diphosphate biosynthesis via DXP pathway; isopentenyl diphosphate from 1-deoxy-D-xylulose 5-phosphate: step 1/6. Catalyzes the NADPH-dependent rearrangement and reduction of 1-deoxy-D-xylulose-5-phosphate (DXP) to 2-C-methyl-D-erythritol 4-phosphate (MEP). The sequence is that of 1-deoxy-D-xylulose 5-phosphate reductoisomerase from Pelodictyon phaeoclathratiforme (strain DSM 5477 / BU-1).